The sequence spans 205 residues: ATP phosphoribosyltransferase (205 aa).

Belongs to the ATP phosphoribosyltransferase family. Short subfamily. In terms of assembly, heteromultimer composed of HisG and HisZ subunits.

The protein resides in the cytoplasm. It carries out the reaction 1-(5-phospho-beta-D-ribosyl)-ATP + diphosphate = 5-phospho-alpha-D-ribose 1-diphosphate + ATP. It functions in the pathway amino-acid biosynthesis; L-histidine biosynthesis; L-histidine from 5-phospho-alpha-D-ribose 1-diphosphate: step 1/9. Catalyzes the condensation of ATP and 5-phosphoribose 1-diphosphate to form N'-(5'-phosphoribosyl)-ATP (PR-ATP). Has a crucial role in the pathway because the rate of histidine biosynthesis seems to be controlled primarily by regulation of HisG enzymatic activity. This is ATP phosphoribosyltransferase from Staphylococcus saprophyticus subsp. saprophyticus (strain ATCC 15305 / DSM 20229 / NCIMB 8711 / NCTC 7292 / S-41).